The chain runs to 188 residues: Threonylcarbamoyl-AMP synthase (188 aa).

A YrdC-like domain is found at 3 to 188 (QLHPSDIKDI…RSGKILRNGQ (186 aa)).

Belongs to the SUA5 family. TsaC subfamily.

The protein localises to the cytoplasm. The enzyme catalyses L-threonine + hydrogencarbonate + ATP = L-threonylcarbamoyladenylate + diphosphate + H2O. Required for the formation of a threonylcarbamoyl group on adenosine at position 37 (t(6)A37) in tRNAs that read codons beginning with adenine. Catalyzes the conversion of L-threonine, HCO(3)(-)/CO(2) and ATP to give threonylcarbamoyl-AMP (TC-AMP) as the acyladenylate intermediate, with the release of diphosphate. The protein is Threonylcarbamoyl-AMP synthase of Shewanella baltica (strain OS155 / ATCC BAA-1091).